Reading from the N-terminus, the 159-residue chain is Ribosomal RNA large subunit methyltransferase H (159 aa).

S-adenosyl-L-methionine is bound by residues glycine 108 and 127 to 132; that span reads FSKMTF.

It belongs to the RNA methyltransferase RlmH family. In terms of assembly, homodimer.

The protein resides in the cytoplasm. The catalysed reaction is pseudouridine(1915) in 23S rRNA + S-adenosyl-L-methionine = N(3)-methylpseudouridine(1915) in 23S rRNA + S-adenosyl-L-homocysteine + H(+). Functionally, specifically methylates the pseudouridine at position 1915 (m3Psi1915) in 23S rRNA. The protein is Ribosomal RNA large subunit methyltransferase H of Clostridium beijerinckii (strain ATCC 51743 / NCIMB 8052) (Clostridium acetobutylicum).